The following is a 452-amino-acid chain: Probable ECA polymerase (452 aa).

Helical transmembrane passes span 6 to 26 (FSGLLVVWLLSTLFIATLTWF), 37 to 57 (VFFSLLFLLTFFFGFPLTSVL), 63 to 83 (VGVAPPEILLQALLSAACFYG), 118 to 138 (VILMGIALVSVAIFFMHNGFL), 155 to 175 (GVALKRFFYFFIPAMLVVYFL), 181 to 201 (AWLFFLVSTVAFGLLTYMIVG), 207 to 227 (IIIAFAIFLFIGIIRGWISLW), 228 to 248 (MLAAAGVLGIVGMFWLALKRY), 341 to 361 (LVVMGGALFIPLGAIVVGLII), 378 to 398 (YKAAILHSFCFGAIFNMIVLA), and 410 to 430 (VFFLVVFGASLLVAKLLFWLF).

Belongs to the WzyE family. As to quaternary structure, probably part of a complex composed of WzxE, WzyE and WzzE.

The protein localises to the cell inner membrane. Its pathway is bacterial outer membrane biogenesis; enterobacterial common antigen biosynthesis. Its function is as follows. Probably involved in the polymerization of enterobacterial common antigen (ECA) trisaccharide repeat units. This is Probable ECA polymerase from Salmonella choleraesuis (strain SC-B67).